The sequence spans 498 residues: Probable malate:quinone oxidoreductase 2 (498 aa).

Belongs to the MQO family. FAD serves as cofactor.

The catalysed reaction is (S)-malate + a quinone = a quinol + oxaloacetate. Its pathway is carbohydrate metabolism; tricarboxylic acid cycle; oxaloacetate from (S)-malate (quinone route): step 1/1. The chain is Probable malate:quinone oxidoreductase 2 from Staphylococcus epidermidis (strain ATCC 35984 / DSM 28319 / BCRC 17069 / CCUG 31568 / BM 3577 / RP62A).